Reading from the N-terminus, the 317-residue chain is Thymidylate synthase (317 aa).

Residues Arg24 and 179-180 (RR) each bind dUMP. The Nucleophile role is filled by Cys199. DUMP-binding positions include 219–222 (RSAD), Asn230, and 260–262 (HIY). Asp222 contributes to the (6R)-5,10-methylene-5,6,7,8-tetrahydrofolate binding site. Ala316 is a (6R)-5,10-methylene-5,6,7,8-tetrahydrofolate binding site.

Belongs to the thymidylate synthase family. Bacterial-type ThyA subfamily. As to quaternary structure, homodimer.

It localises to the cytoplasm. The catalysed reaction is dUMP + (6R)-5,10-methylene-5,6,7,8-tetrahydrofolate = 7,8-dihydrofolate + dTMP. Its pathway is pyrimidine metabolism; dTTP biosynthesis. Catalyzes the reductive methylation of 2'-deoxyuridine-5'-monophosphate (dUMP) to 2'-deoxythymidine-5'-monophosphate (dTMP) while utilizing 5,10-methylenetetrahydrofolate (mTHF) as the methyl donor and reductant in the reaction, yielding dihydrofolate (DHF) as a by-product. This enzymatic reaction provides an intracellular de novo source of dTMP, an essential precursor for DNA biosynthesis. This chain is Thymidylate synthase, found in Oceanobacillus iheyensis (strain DSM 14371 / CIP 107618 / JCM 11309 / KCTC 3954 / HTE831).